The following is a 410-amino-acid chain: Arginine deiminase (410 aa).

Cys399 serves as the catalytic Amidino-cysteine intermediate.

Belongs to the arginine deiminase family.

The protein resides in the cytoplasm. It carries out the reaction L-arginine + H2O = L-citrulline + NH4(+). Its pathway is amino-acid degradation; L-arginine degradation via ADI pathway; carbamoyl phosphate from L-arginine: step 1/2. This is Arginine deiminase from Listeria monocytogenes serotype 4a (strain HCC23).